The following is a 169-amino-acid chain: MSSSNPRGIPPAQFFEFKELSMEEAQGHLEKFQEAIAKYKFMETSVVRRVASLDDKIPDIRKTLQSVQFLKERQGDSFTVTYELNDTLNAKAEVEAKDNVYLWLGANVMLEYTVEEAEALLTQKLNSAEETLKACKEDLEFLRAQVTTMEVNTARVYNYTVLLRKKTKM.

This sequence belongs to the prefoldin subunit alpha family. Heterohexamer of two PFD-alpha type and four PFD-beta type subunits.

Functionally, binds specifically to cytosolic chaperonin (c-CPN) and transfers target proteins to it. Binds to nascent polypeptide chain and promotes folding in an environment in which there are many competing pathways for nonnative proteins. The sequence is that of Probable prefoldin subunit 3 from Schizosaccharomyces pombe (strain 972 / ATCC 24843) (Fission yeast).